The following is a 309-amino-acid chain: Olfactory receptor 5B21 (309 aa).

Topologically, residues 1 to 26 (MENSTEVTEFILLGLTDDPNLQIPLL) are extracellular. N-linked (GlcNAc...) asparagine glycosylation is present at Asn-3. The chain crosses the membrane as a helical span at residues 27–47 (LAFLFIYLITLLGNGGMMVII). Residues 48-55 (HSDSHLHT) lie on the Cytoplasmic side of the membrane. Residues 56–76 (PMYFFLSNLSLVDLGYSSAVA) form a helical membrane-spanning segment. Over 77-95 (PKTVAALRSGDKAISYDGC) the chain is Extracellular. Cys-95 and Cys-177 are joined by a disulfide. Residues 96-116 (AAQFFFFVGFATVECYLLASM) traverse the membrane as a helical segment. Over 117-137 (AYDRHAAVCRPLHYTTTMTAG) the chain is Cytoplasmic. Residues 138-158 (VCALLATGSYVSGFLNASIHA) traverse the membrane as a helical segment. The Extracellular portion of the chain corresponds to 159–199 (AGTFRLSFCGSNEINHFFCDIPPLLALSCSDTRISKLVVFV). The helical transmembrane segment at 200–220 (AGFNVFFTLLVILISYFFICI) threads the bilayer. Topologically, residues 221–235 (TIQRMHSAEGQKKVF) are cytoplasmic. The helical transmembrane segment at 236 to 256 (STCASHLTALSIFYGTIIFMY) threads the bilayer. The Extracellular segment spans residues 257–270 (LQPNSSQSVDTDKI). Asn-260 carries N-linked (GlcNAc...) asparagine glycosylation. The helical transmembrane segment at 271-291 (ASVFYTVVIPMLNPLIYSLRN) threads the bilayer. The Cytoplasmic portion of the chain corresponds to 292–309 (KEVKSALWKILNKLYPQY).

The protein belongs to the G-protein coupled receptor 1 family.

Its subcellular location is the cell membrane. Odorant receptor. This Homo sapiens (Human) protein is Olfactory receptor 5B21.